Here is a 105-residue protein sequence, read N- to C-terminus: DNA-directed RNA polymerase subunit omega (105 aa).

It belongs to the RNA polymerase subunit omega family. The RNAP catalytic core consists of 2 alpha, 1 beta, 1 beta' and 1 omega subunit. When a sigma factor is associated with the core the holoenzyme is formed, which can initiate transcription.

It carries out the reaction RNA(n) + a ribonucleoside 5'-triphosphate = RNA(n+1) + diphosphate. Promotes RNA polymerase assembly. Latches the N- and C-terminal regions of the beta' subunit thereby facilitating its interaction with the beta and alpha subunits. This Streptococcus equi subsp. equi (strain 4047) protein is DNA-directed RNA polymerase subunit omega.